The chain runs to 211 residues: Small ribosomal subunit protein uS3 (211 aa).

In terms of domain architecture, KH type-2 spans Leu-38–Arg-106.

Belongs to the universal ribosomal protein uS3 family. In terms of assembly, part of the 30S ribosomal subunit. Forms a tight complex with proteins S10 and S14.

In terms of biological role, binds the lower part of the 30S subunit head. Binds mRNA in the 70S ribosome, positioning it for translation. The protein is Small ribosomal subunit protein uS3 of Geobacter sulfurreducens (strain ATCC 51573 / DSM 12127 / PCA).